Reading from the N-terminus, the 190-residue chain is Frataxin homolog, mitochondrial (190 aa).

It belongs to the frataxin family. In terms of assembly, monomer (probable predominant form). Oligomer. Interacts with IscU. Component of the mitochondrial core iron-sulfur cluster (ISC) assembly complex at least composed of the cysteine desulfurase Nfs1, the scaffold protein IscU, the accessory protein bcn92/Isd11/Lyrm4, and probably fh/frataxin.

The protein resides in the mitochondrion. It catalyses the reaction 4 Fe(2+) + O2 + 4 H(+) = 4 Fe(3+) + 2 H2O. Its function is as follows. Promotes the biosynthesis of heme as well as the assembly and repair of iron-sulfur clusters by delivering Fe(2+) to proteins involved in these pathways. May play a role in the protection against iron-catalyzed oxidative stress through its ability to catalyze the oxidation of Fe(2+) to Fe(3+). May be able to store large amounts of the metal in the form of a ferrihydrite mineral by oligomerization. Required for ecdysteroidogenesis in the prothoracic gland which is necessary for larval to pupal transition. The protein is Frataxin homolog, mitochondrial of Drosophila melanogaster (Fruit fly).